A 244-amino-acid chain; its full sequence is Large ribosomal subunit protein uL30B (244 aa).

Polar residues predominate over residues 1–11; that stretch reads MSTEKILTPES. The tract at residues 1–21 is disordered; that stretch reads MSTEKILTPESQLKKTKAQQK.

The protein belongs to the universal ribosomal protein uL30 family. Component of the large ribosomal subunit (LSU). Mature yeast ribosomes consist of a small (40S) and a large (60S) subunit. The 40S small subunit contains 1 molecule of ribosomal RNA (18S rRNA) and 33 different proteins (encoded by 57 genes). The large 60S subunit contains 3 rRNA molecules (25S, 5.8S and 5S rRNA) and 46 different proteins (encoded by 81 genes).

The protein localises to the cytoplasm. Its function is as follows. Component of the ribosome, a large ribonucleoprotein complex responsible for the synthesis of proteins in the cell. The small ribosomal subunit (SSU) binds messenger RNAs (mRNAs) and translates the encoded message by selecting cognate aminoacyl-transfer RNA (tRNA) molecules. The large subunit (LSU) contains the ribosomal catalytic site termed the peptidyl transferase center (PTC), which catalyzes the formation of peptide bonds, thereby polymerizing the amino acids delivered by tRNAs into a polypeptide chain. The nascent polypeptides leave the ribosome through a tunnel in the LSU and interact with protein factors that function in enzymatic processing, targeting, and the membrane insertion of nascent chains at the exit of the ribosomal tunnel. The chain is Large ribosomal subunit protein uL30B from Saccharomyces cerevisiae (strain ATCC 204508 / S288c) (Baker's yeast).